Consider the following 901-residue polypeptide: Vacuolar import and degradation protein 22 (901 aa).

Residues 1–10 show a composition bias toward polar residues; sequence MRAMDTQVQS. A disordered region spans residues 1–54; the sequence is MRAMDTQVQSAERGLVLPPMNSTVSSATAATTATNTDTDTDGDRDEERESLAED. The N-linked (GlcNAc...) asparagine glycan is linked to asparagine 21. Positions 27-37 are enriched in low complexity; it reads ATAATTATNTD. The BED-type zinc-finger motif lies at 66–122; the sequence is RDRSRYLGHFLGVDKMLEAVKCKYCGVIIRRQGNSISMAEASQTHLWSTHKIDPNAN. Positions 87, 90, 110, and 115 each coordinate Zn(2+). 2 N-linked (GlcNAc...) asparagine glycosylation sites follow: asparagine 242 and asparagine 291. A helical transmembrane segment spans residues 381–401; the sequence is YYHNCIISIINSAILPLFGTP. N-linked (GlcNAc...) asparagine glycans are attached at residues asparagine 540, asparagine 645, asparagine 649, asparagine 652, asparagine 662, asparagine 669, asparagine 673, asparagine 688, and asparagine 722. A compositionally biased stretch (low complexity) spans 646 to 677; it reads NSHNTSNHSNMNIHTDNQTNNINNRSGNNSDN. Residues 646 to 727 form a disordered region; sequence NSHNTSNHSN…NSNNNLSFGS (82 aa). Positions 679 to 688 are enriched in basic and acidic residues; it reads DNEHDNDNDN. Low complexity predominate over residues 718–727; the sequence is NSNNNLSFGS.

Belongs to the VID22 family. Glycosylated.

Its subcellular location is the cell membrane. It localises to the nucleus. Functionally, has a role in the negative regulation of gluconeogenesis. Imports fructose-1,6-bisphosphatase (FBPase) into the intermediate vacuole import and degradation (Vid) vesicles. This is an indirect role and requires cyclophilin A. The chain is Vacuolar import and degradation protein 22 (VID22) from Saccharomyces cerevisiae (strain ATCC 204508 / S288c) (Baker's yeast).